A 168-amino-acid chain; its full sequence is Disulfide bond formation protein B 2 (168 aa).

Topologically, residues M1–F9 are cytoplasmic. A helical transmembrane segment spans residues F10–H26. Over L27–L44 the chain is Periplasmic. C36 and C39 are oxidised to a cystine. Residues M45–P61 traverse the membrane as a helical segment. Topologically, residues A62 to R67 are cytoplasmic. The chain crosses the membrane as a helical span at residues A68 to G85. Topologically, residues R86 to E140 are periplasmic. The cysteines at positions 100 and 126 are disulfide-linked. The helical transmembrane segment at W141–A159 threads the bilayer. At Y160–A168 the chain is on the cytoplasmic side.

This sequence belongs to the DsbB family.

Its subcellular location is the cell inner membrane. Required for disulfide bond formation in some periplasmic proteins. Acts by oxidizing the DsbA protein. The protein is Disulfide bond formation protein B 2 of Pseudomonas entomophila (strain L48).